Here is a 505-residue protein sequence, read N- to C-terminus: Glutamate--tRNA ligase (505 aa).

The 'HIGH' region signature appears at 12–22; that stretch reads PSPTGDPHVGT. The 'KMSKS' region motif lies at 253–257; the sequence is KLSKR. K256 is a binding site for ATP.

This sequence belongs to the class-I aminoacyl-tRNA synthetase family. Glutamate--tRNA ligase type 1 subfamily. Monomer.

It localises to the cytoplasm. The enzyme catalyses tRNA(Glu) + L-glutamate + ATP = L-glutamyl-tRNA(Glu) + AMP + diphosphate. Its function is as follows. Catalyzes the attachment of glutamate to tRNA(Glu) in a two-step reaction: glutamate is first activated by ATP to form Glu-AMP and then transferred to the acceptor end of tRNA(Glu). This Chlamydophila psittaci (strain ATCC VR-125 / 6BC) (Chlamydia psittaci) protein is Glutamate--tRNA ligase.